Consider the following 522-residue polypeptide: Nuclear pore glycoprotein p62 (522 aa).

The residue at position 2 (Ser2) is an N-acetylserine. A run of 5 repeats spans residues 6 to 7 (FG), 44 to 45 (FG), 76 to 77 (FG), 114 to 115 (FG), and 142 to 143 (FG). A 5 X 2 AA repeats of F-G region spans residues 6-143 (FGGTGAPTGG…GTAPTGFVFG (138 aa)). Positions 169-179 (SGFNIGSAGNS) are enriched in polar residues. 2 disordered regions span residues 169–215 (SGFN…ATIT) and 260–288 (APGA…SSTT). Composition is skewed to low complexity over residues 180–215 (AQPT…ATIT) and 262–288 (GAAS…SSTT). The required for centrosome localization stretch occupies residues 328–458 (MTYAQLESLI…QDLKDIIEHL (131 aa)). The stretch at 328-458 (MTYAQLESLI…QDLKDIIEHL (131 aa)) forms a coiled coil. An O-linked (GlcNAc) threonine glycan is attached at Thr373. Ser408 and Ser418 each carry phosphoserine. Residue Ser468 is glycosylated (O-linked (GlcNAc) serine).

This sequence belongs to the nucleoporin NSP1/NUP62 family. Component of the p62 complex, a complex at least composed of NUP62, NUP54, and NUP58. Interacts with NUP88. Interacts with NUTF2. Interacts with HIKESHI. Interacts with OSBPL8. Interacts with CAPG. Interacts with SAS6 and TUBG1 at the centrosome. Interacts with MCM3AP isoform GANP. In terms of assembly, (Microbial infection) Interacts with Epstein-barr virus BGLF4; this interaction allows BGLF4 nuclear entry. In terms of processing, O-glycosylated. Contains about 10 N-acetylglucosamine side chain sites predicted for the entire protein, among which only one in the C-terminal. The inner channel of the NPC has a different redox environment from the cytoplasm and allows the formation of interchain disulfide bonds between some nucleoporins, the significant increase of these linkages upon oxidative stress reduces the permeability of the NPC.

It is found in the nucleus. The protein resides in the nuclear pore complex. The protein localises to the cytoplasm. It localises to the cytoskeleton. Its subcellular location is the spindle pole. It is found in the nucleus envelope. The protein resides in the microtubule organizing center. The protein localises to the centrosome. Functionally, essential component of the nuclear pore complex. The N-terminal is probably involved in nucleocytoplasmic transport. The C-terminal is involved in protein-protein interaction probably via coiled-coil formation, promotes its association with centrosomes and may function in anchorage of p62 to the pore complex. Plays a role in mitotic cell cycle progression by regulating centrosome segregation, centriole maturation and spindle orientation. It might be involved in protein recruitment to the centrosome after nuclear breakdown. The sequence is that of Nuclear pore glycoprotein p62 (NUP62) from Homo sapiens (Human).